An 808-amino-acid polypeptide reads, in one-letter code: uncharacterized protein (808 aa).

35–42 (GPNNVGKT) provides a ligand contact to ATP.

This is an uncharacterized protein from Methanocaldococcus jannaschii (strain ATCC 43067 / DSM 2661 / JAL-1 / JCM 10045 / NBRC 100440) (Methanococcus jannaschii).